An 83-amino-acid chain; its full sequence is SGHHZBSTBZASZSSKPCCRZCACTKSIPPZCRCSZVRLNSCHSACKSCACTFSIPAZCFCGBIBBFCYKPCKSSHSBBBBWN.

Intrachain disulfides connect Cys-18/Cys-72, Cys-19/Cys-34, Cys-22/Cys-68, Cys-24/Cys-32, Cys-42/Cys-49, Cys-46/Cys-61, and Cys-51/Cys-59.

It belongs to the Bowman-Birk serine protease inhibitor family.

The sequence is that of Bowman-Birk type seed trypsin and chymotrypsin inhibitor from Vigna unguiculata (Cowpea).